The sequence spans 365 residues: MNTTTELIPPTFQVNDDEEEACMFAMQLASASVLPMVLKSAIELNLLESIAKAGPGAYVSPSQLAAALPSSQPDTPVMLDRILRLLASYSVLNCKLRDLPDARVERLYGLAPVCKFLTKNSDGVSMAPLLLMNQDKILMESWYHLKDAVLDGGIPFNKAYGMTAFEYHGKDPRFNKVFNQGMSNHSTITMKKILQTYDGFGGLKTVVDVGGGTGATLNMIISKYPNLKGINFDLPHVVEDAPSYAGVEHVGGDMFVSVPKGDAIFMKWICHDWSDAHCLAFLKNCYKALPKDGKVILAECILPEAPDSKLTTKNVILIDVIMLAHNPGGKERTEKEFEAFGKQAGFKSFNKACCAYNTWVIEYYK.

Asn-133 contributes to the (E)-ferulate binding site. Gly-210, Asp-233, Asp-253, Met-254, Met-266, and Lys-267 together coordinate S-adenosyl-L-homocysteine. Catalysis depends on His-271, which acts as the Proton acceptor. Asp-272 serves as a coordination point for (E)-5-hydroxyferulate.

The protein belongs to the class I-like SAM-binding methyltransferase superfamily. Cation-independent O-methyltransferase family. COMT subfamily. As to quaternary structure, homodimer.

The catalysed reaction is (E)-caffeate + S-adenosyl-L-methionine = (E)-ferulate + S-adenosyl-L-homocysteine + H(+). It carries out the reaction (E)-5-hydroxyferulate + S-adenosyl-L-methionine = (E)-sinapate + S-adenosyl-L-homocysteine + H(+). The protein operates within aromatic compound metabolism; phenylpropanoid biosynthesis. Its activity is regulated as follows. Inhibited by Cu(2+), and to a lesser extent by Ni(2+), Mn(2+), Co(2+), Fe(3+) and Zn(2+). Unaffected by Fe(2+) and Mg(2+). Catalyzes the conversion of caffeic acid to ferulic acid and of 5-hydroxyferulic acid to sinapic acid. The resulting products may subsequently be converted to the corresponding alcohols that are incorporated into lignins. The chain is Caffeic acid 3-O-methyltransferase from Ammi majus (Bishop's weed).